The following is a 100-amino-acid chain: NADH-quinone oxidoreductase subunit K (100 aa).

Helical transmembrane passes span 4–24 (TSYYVLLSAILFTIGVLGVLL), 29–49 (IVVFMAVELMLNAANLALVAF), and 60–80 (VIVFFVITVAAAEVAVGLALL).

The protein belongs to the complex I subunit 4L family. As to quaternary structure, NDH-1 is composed of 14 different subunits. Subunits NuoA, H, J, K, L, M, N constitute the membrane sector of the complex.

It localises to the cell membrane. The enzyme catalyses a quinone + NADH + 5 H(+)(in) = a quinol + NAD(+) + 4 H(+)(out). Functionally, NDH-1 shuttles electrons from NADH, via FMN and iron-sulfur (Fe-S) centers, to quinones in the respiratory chain. The immediate electron acceptor for the enzyme in this species is believed to be ubiquinone. Couples the redox reaction to proton translocation (for every two electrons transferred, four hydrogen ions are translocated across the cytoplasmic membrane), and thus conserves the redox energy in a proton gradient. This Chloroflexus aurantiacus (strain ATCC 29366 / DSM 635 / J-10-fl) protein is NADH-quinone oxidoreductase subunit K.